Consider the following 281-residue polypeptide: Diaminopimelate epimerase (281 aa).

The substrate site is built by Asn13, Gln51, and Asn70. The active-site Proton donor is Cys79. Substrate is bound by residues 80–81 (GN), Asn163, Asn196, and 214–215 (ER). Catalysis depends on Cys223, which acts as the Proton acceptor. 224–225 (GS) lines the substrate pocket.

It belongs to the diaminopimelate epimerase family. Homodimer.

The protein localises to the cytoplasm. It catalyses the reaction (2S,6S)-2,6-diaminopimelate = meso-2,6-diaminopimelate. The protein operates within amino-acid biosynthesis; L-lysine biosynthesis via DAP pathway; DL-2,6-diaminopimelate from LL-2,6-diaminopimelate: step 1/1. In terms of biological role, catalyzes the stereoinversion of LL-2,6-diaminopimelate (L,L-DAP) to meso-diaminopimelate (meso-DAP), a precursor of L-lysine and an essential component of the bacterial peptidoglycan. The sequence is that of Diaminopimelate epimerase from Alcanivorax borkumensis (strain ATCC 700651 / DSM 11573 / NCIMB 13689 / SK2).